The primary structure comprises 67 residues: MKTEIHPNYKAAKISCASCGTVYETRTSIGDINIEICSACHPFFTGKSKLVDTTGRVDKFKKKYKMQ.

The protein belongs to the bacterial ribosomal protein bL31 family. Type A subfamily. As to quaternary structure, part of the 50S ribosomal subunit.

In terms of biological role, binds the 23S rRNA. This chain is Large ribosomal subunit protein bL31, found in Leptospira borgpetersenii serovar Hardjo-bovis (strain JB197).